Consider the following 308-residue polypeptide: Glutaminase 2 (308 aa).

Substrate contacts are provided by S66, N117, E161, N168, Y192, Y244, and V262.

It belongs to the glutaminase family. In terms of assembly, homotetramer.

It catalyses the reaction L-glutamine + H2O = L-glutamate + NH4(+). The chain is Glutaminase 2 from Shigella flexneri.